The primary structure comprises 261 residues: Probable membrane transporter protein XF_0764 (261 aa).

8 helical membrane passes run 6 to 26 (LIVT…LGGG), 29 to 49 (ILAT…IAIG), 78 to 98 (VIFA…GMLI), 99 to 119 (DGQR…LLML), 150 to 170 (AASG…LIFA), 175 to 195 (TINA…ITTL), 205 to 225 (WTIA…GTLL), and 239 to 259 (VFGL…WASL).

This sequence belongs to the 4-toluene sulfonate uptake permease (TSUP) (TC 2.A.102) family.

It localises to the cell membrane. This chain is Probable membrane transporter protein XF_0764, found in Xylella fastidiosa (strain 9a5c).